Consider the following 617-residue polypeptide: ATP-dependent rRNA helicase SPB4 (617 aa).

The short motif at 10-38 is the Q motif element; the sequence is WKNLQYDLQPWIKEAIASLGFPTMTPVQA. The Helicase ATP-binding domain maps to 41 to 233; that stretch reads IPLLSGNKDV…RAGMNNPVKV (193 aa). 54–61 is a binding site for ATP; sequence AVTGSGKT. The DEAD box signature appears at 181–184; that stretch reads DEAD. One can recognise a Helicase C-terminal domain in the interval 261–421; that stretch reads KITTLIKLLH…EMPTPDLNQS (161 aa). Positions 515–585 form a coiled coil; the sequence is ADNQQEASRL…EKQIMEESSD (71 aa). Positions 547–617 are disordered; that stretch reads KNEAWSSKTE…GSMQGSFDDL (71 aa). Basic and acidic residues predominate over residues 555–566; that stretch reads TETKETKQERRE. Over residues 608-617 the composition is skewed to polar residues; the sequence is GSMQGSFDDL.

Belongs to the DEAD box helicase family. DDX55/SPB4 subfamily. Component of pre-60S ribosomal complexes.

Its subcellular location is the nucleus. The protein localises to the nucleolus. It carries out the reaction ATP + H2O = ADP + phosphate + H(+). ATP-binding RNA helicase involved in the biogenesis of 60S ribosomal subunits. Binds 90S pre-ribosomal particles and dissociates from pre-60S ribosomal particles after processing of 27SB pre-rRNA. Required for the normal formation of 18S rRNA through the processing of pre-rRNAs at sites A0, A1 and A2, and the normal formation of 25S and 5.8S rRNAs through the processing of pre-rRNAs at sites C1 and C2. This is ATP-dependent rRNA helicase SPB4 from Scheffersomyces stipitis (strain ATCC 58785 / CBS 6054 / NBRC 10063 / NRRL Y-11545) (Yeast).